The sequence spans 72 residues: Translation initiation factor IF-1 (72 aa).

In terms of domain architecture, S1-like spans 1-72; the sequence is MAKEEAIEVE…TRGRITYREK (72 aa).

Belongs to the IF-1 family. Component of the 30S ribosomal translation pre-initiation complex which assembles on the 30S ribosome in the order IF-2 and IF-3, IF-1 and N-formylmethionyl-tRNA(fMet); mRNA recruitment can occur at any time during PIC assembly.

It is found in the cytoplasm. One of the essential components for the initiation of protein synthesis. Stabilizes the binding of IF-2 and IF-3 on the 30S subunit to which N-formylmethionyl-tRNA(fMet) subsequently binds. Helps modulate mRNA selection, yielding the 30S pre-initiation complex (PIC). Upon addition of the 50S ribosomal subunit IF-1, IF-2 and IF-3 are released leaving the mature 70S translation initiation complex. This is Translation initiation factor IF-1 from Syntrophotalea carbinolica (strain DSM 2380 / NBRC 103641 / GraBd1) (Pelobacter carbinolicus).